A 248-amino-acid chain; its full sequence is UPF0736 protein BCE33L1074 (248 aa).

The protein belongs to the UPF0736 family.

This Bacillus cereus (strain ZK / E33L) protein is UPF0736 protein BCE33L1074.